The chain runs to 266 residues: MLIATPYEDLLRLVLDCGVAKMDRTGTGTRSLFGQQLRYDLSVGFPLVTTKKVHFKSVVYELLWFLRGDSNVAWLHEHGVNIWDEWASSTGDLGPIYGVQWRSWPTSSGDYIDQISTALDLLRTEPDSRRIIVSAWNVGEIPQMALPPCHAFFQFYVAQGRLSCQLYQRSADMFLGVPFNIASYALLTHMMAAQSGLLVGEFVWTGGDCHIYDNHVEQVQLQLSREPRAYPELFLAQRDSIFDYVYEDVVVTNYDPHPAIKAPVAI.

A dUMP-binding site is contributed by arginine 24. Histidine 54 serves as a coordination point for (6R)-5,10-methylene-5,6,7,8-tetrahydrofolate. DUMP is bound at residue 129 to 130; the sequence is RR. Cysteine 149 acts as the Nucleophile in catalysis. Residues 169-172, asparagine 180, and 210-212 contribute to the dUMP site; these read RSAD and HIY. (6R)-5,10-methylene-5,6,7,8-tetrahydrofolate is bound at residue aspartate 172. Alanine 265 is a (6R)-5,10-methylene-5,6,7,8-tetrahydrofolate binding site.

It belongs to the thymidylate synthase family. Bacterial-type ThyA subfamily. Homodimer.

The protein localises to the cytoplasm. It carries out the reaction dUMP + (6R)-5,10-methylene-5,6,7,8-tetrahydrofolate = 7,8-dihydrofolate + dTMP. Its pathway is pyrimidine metabolism; dTTP biosynthesis. Catalyzes the reductive methylation of 2'-deoxyuridine-5'-monophosphate (dUMP) to 2'-deoxythymidine-5'-monophosphate (dTMP) while utilizing 5,10-methylenetetrahydrofolate (mTHF) as the methyl donor and reductant in the reaction, yielding dihydrofolate (DHF) as a by-product. This enzymatic reaction provides an intracellular de novo source of dTMP, an essential precursor for DNA biosynthesis. This chain is Thymidylate synthase, found in Mycobacterium leprae (strain TN).